The primary structure comprises 1311 residues: Ubiquitin carboxyl-terminal hydrolase 36 (1311 aa).

2 stretches are compositionally biased toward low complexity: residues 120–134 and 156–174; these read AAAA…SAGS and STPT…SSSS. The segment at 120-189 is disordered; that stretch reads AAAATNNGNS…NPNELPKPKR (70 aa). The USP domain occupies 212-533; the sequence is AGMINVGNTC…NSYIMFYELD (322 aa). The Nucleophile role is filled by cysteine 221. Histidine 492 acts as the Proton acceptor in catalysis. Residues 546-575 are disordered; sequence NGLRQLSNGHHHHQQQQQQHQQQQQQQPTV. Residues 560 to 572 are compositionally biased toward low complexity; sequence QQQQQHQQQQQQQ. Serine 581 bears the Phosphoserine mark. Disordered regions lie at residues 587-620, 640-1095, and 1136-1311; these read TRFI…GHSQ, KFQE…GCLN, and DHGD…QQQS. 3 stretches are compositionally biased toward low complexity: residues 605-616, 660-716, and 759-774; these read TTTTTATNNTTN, APAV…QQQQ, and TLTL…STPT. A Phosphothreonine modification is found at threonine 767. Residues serine 787 and serine 789 each carry the phosphoserine modification. The segment covering 795 to 826 has biased composition (low complexity); sequence SSGTPSSSTPTTTTTAAAAAASSPMQATAAAT. Residues 836–853 are compositionally biased toward basic residues; sequence ARKRSLPDHHHHHPHHHV. Over residues 869 to 879 the composition is skewed to polar residues; it reads PATNFNSSSSK. The span at 880-889 shows a compositional bias: basic and acidic residues; that stretch reads QKTDAIDEIF. Residues 896 to 905 are compositionally biased toward basic residues; it reads NKKRINNKNQ. Residues 910-920 are compositionally biased toward acidic residues; it reads GDEEEDDEETL. 2 stretches are compositionally biased toward low complexity: residues 925–942 and 950–979; these read NNSS…PTTN and VSSS…STSA. The segment covering 980–989 has biased composition (pro residues); sequence PPSPKTPPSP. The residue at position 982 (serine 982) is a Phosphoserine. A Phosphothreonine modification is found at threonine 985. Serine 988 carries the post-translational modification Phosphoserine. Acidic residues predominate over residues 1006–1020; sequence DDDDDEEEEDEDDEE. Residues 1037–1050 are compositionally biased toward low complexity; that stretch reads PFSSQQKPTPSPST. Residue serine 1047 is modified to Phosphoserine. At threonine 1050 the chain carries Phosphothreonine. Residues 1060 to 1081 show a composition bias toward polar residues; it reads FNGTSSSTPHVGNGYQSEPSTP. Composition is skewed to low complexity over residues 1154 to 1176 and 1204 to 1221; these read VVTT…TADA and TANG…PGYN. Polar residues predominate over residues 1246 to 1255; the sequence is QHASSSYRSN. The span at 1267–1276 shows a compositional bias: gly residues; it reads GGNGGGGSGG.

This sequence belongs to the peptidase C19 family. As to quaternary structure, interacts with atms/PAF1, but not with CycT.

It is found in the nucleus. Its subcellular location is the nucleolus. It catalyses the reaction Thiol-dependent hydrolysis of ester, thioester, amide, peptide and isopeptide bonds formed by the C-terminal Gly of ubiquitin (a 76-residue protein attached to proteins as an intracellular targeting signal).. Required for maintaining multiple types of adult stem cells, including male and female germline, epithelial follicle cell and intestinal stem cells. May function as a transcriptional repressor by continually deubiquiting histone H2B at the promoters of genes critical for cellular differentiation, thereby preventing histone H3 'Lys-4' trimethylation (H3K4). Controls selective autophagy activation by ubiquitinated proteins. The chain is Ubiquitin carboxyl-terminal hydrolase 36 (Usp36) from Drosophila willistoni (Fruit fly).